The following is a 71-amino-acid chain: Phosphatidylinositol N-acetylglucosaminyltransferase subunit Y (71 aa).

Residue M1 is a topological domain, cytoplasmic. The chain crosses the membrane as a helical span at residues F2–L21. The Lumenal segment spans residues Y22–S44. Residues L45 to L65 form a helical membrane-spanning segment. The Cytoplasmic portion of the chain corresponds to K66–N71.

In terms of assembly, component of the glycosylphosphatidylinositol-N-acetylglucosaminyltransferase (GPI-GnT) complex composed at least by PIGA, PIGC, PIGH, PIGP, PIGQ, PIGY and DPM2.

Its subcellular location is the endoplasmic reticulum membrane. It functions in the pathway glycolipid biosynthesis; glycosylphosphatidylinositol-anchor biosynthesis. In terms of biological role, part of the glycosylphosphatidylinositol-N-acetylglucosaminyltransferase (GPI-GnT) complex that catalyzes the transfer of N-acetylglucosamine from UDP-N-acetylglucosamine to phosphatidylinositol and participates in the first step of GPI biosynthesis. May act by regulating the catalytic subunit PIGA. The polypeptide is Phosphatidylinositol N-acetylglucosaminyltransferase subunit Y (Xenopus tropicalis (Western clawed frog)).